The sequence spans 346 residues: Phosphate acyltransferase (346 aa).

This sequence belongs to the PlsX family. In terms of assembly, homodimer. Probably interacts with PlsY.

It is found in the cytoplasm. The catalysed reaction is a fatty acyl-[ACP] + phosphate = an acyl phosphate + holo-[ACP]. It functions in the pathway lipid metabolism; phospholipid metabolism. In terms of biological role, catalyzes the reversible formation of acyl-phosphate (acyl-PO(4)) from acyl-[acyl-carrier-protein] (acyl-ACP). This enzyme utilizes acyl-ACP as fatty acyl donor, but not acyl-CoA. In Psychromonas ingrahamii (strain DSM 17664 / CCUG 51855 / 37), this protein is Phosphate acyltransferase.